Here is a 33-residue protein sequence, read N- to C-terminus: Cytochrome b6-f complex subunit 8 (33 aa).

Residues 2 to 22 (LFTVAWASLAAMFSFSIAMVV) form a helical membrane-spanning segment.

This sequence belongs to the PetN family. The 4 large subunits of the cytochrome b6-f complex are cytochrome b6, subunit IV (17 kDa polypeptide, PetD), cytochrome f and the Rieske protein, while the 4 small subunits are PetG, PetL, PetM and PetN. The complex functions as a dimer.

Its subcellular location is the cellular thylakoid membrane. In terms of biological role, component of the cytochrome b6-f complex, which mediates electron transfer between photosystem II (PSII) and photosystem I (PSI), cyclic electron flow around PSI, and state transitions. The sequence is that of Cytochrome b6-f complex subunit 8 from Parasynechococcus marenigrum (strain WH8102).